The chain runs to 299 residues: Bifunctional protein FolD (299 aa).

Residues 166–168 (GRS), S191, and I232 each bind NADP(+).

This sequence belongs to the tetrahydrofolate dehydrogenase/cyclohydrolase family. In terms of assembly, homodimer.

The enzyme catalyses (6R)-5,10-methylene-5,6,7,8-tetrahydrofolate + NADP(+) = (6R)-5,10-methenyltetrahydrofolate + NADPH. It catalyses the reaction (6R)-5,10-methenyltetrahydrofolate + H2O = (6R)-10-formyltetrahydrofolate + H(+). The protein operates within one-carbon metabolism; tetrahydrofolate interconversion. Catalyzes the oxidation of 5,10-methylenetetrahydrofolate to 5,10-methenyltetrahydrofolate and then the hydrolysis of 5,10-methenyltetrahydrofolate to 10-formyltetrahydrofolate. The chain is Bifunctional protein FolD from Anaplasma marginale (strain St. Maries).